A 741-amino-acid chain; its full sequence is Methionine--tRNA ligase (741 aa).

Positions 11-21 match the 'HIGH' region motif; the sequence is PYANGPIHAGH. Zn(2+) contacts are provided by Cys-143, Cys-146, Cys-156, and Cys-159. Positions 345–349 match the 'KMSKS' region motif; it reads KFSTS. Thr-348 is a binding site for ATP. Residues 641–741 form the tRNA-binding domain; it reads EFAKLDLRVG…KEVKLGARIR (101 aa).

The protein belongs to the class-I aminoacyl-tRNA synthetase family. MetG type 1 subfamily. In terms of assembly, homodimer. The cofactor is Zn(2+).

It is found in the cytoplasm. It catalyses the reaction tRNA(Met) + L-methionine + ATP = L-methionyl-tRNA(Met) + AMP + diphosphate. In terms of biological role, is required not only for elongation of protein synthesis but also for the initiation of all mRNA translation through initiator tRNA(fMet) aminoacylation. The protein is Methionine--tRNA ligase of Thermococcus kodakarensis (strain ATCC BAA-918 / JCM 12380 / KOD1) (Pyrococcus kodakaraensis (strain KOD1)).